A 153-amino-acid chain; its full sequence is Heavy metal-associated isoprenylated plant protein 25 (153 aa).

The region spanning 24–88 (LQTVDVRVLI…IIHRTGKRAE (65 aa)) is the HMA domain. Residues C35 and C38 each contribute to the a metal cation site. At C150 the chain carries Cysteine methyl ester. A lipid anchor (S-farnesyl cysteine) is attached at C150. The propeptide at 151 to 153 (VVM) is removed in mature form.

Belongs to the HIPP family. In terms of tissue distribution, expressed in roots, shoot apical meristem, trichomes and flower buds.

The protein localises to the membrane. Its function is as follows. Heavy-metal-binding protein. Binds cadmium. May be involved in cadmium transport and play a role in cadmium detoxification. The chain is Heavy metal-associated isoprenylated plant protein 25 from Arabidopsis thaliana (Mouse-ear cress).